Consider the following 255-residue polypeptide: MPEIRTFLCRSDNIGVLIRDPATGACAAIDVPEAGAVLRVLGETGWSLTDILVTHRHFDHVEGTPEVKARTGARVTAPAKAGDAVPEVDATVREGDAVRLGSLVAAVWETPGHCADHVTYWFERERIAFAGDTLFTLGCGRVMESPPEVLWRSLSRFLALPDETAIYSGHDYVLSNARFALAADPDNPNLKARAELAERVKRDGRFLIPTTLGEEKATNPFLRATEPALARAVGMAPGSDPAAVFTALREWKNRF.

7 residues coordinate Zn(2+): His55, His57, Asp59, His60, His113, Asp132, and His170.

The protein belongs to the metallo-beta-lactamase superfamily. Glyoxalase II family. Monomer. Requires Zn(2+) as cofactor.

It catalyses the reaction an S-(2-hydroxyacyl)glutathione + H2O = a 2-hydroxy carboxylate + glutathione + H(+). It functions in the pathway secondary metabolite metabolism; methylglyoxal degradation; (R)-lactate from methylglyoxal: step 2/2. Thiolesterase that catalyzes the hydrolysis of S-D-lactoyl-glutathione to form glutathione and D-lactic acid. The chain is Hydroxyacylglutathione hydrolase from Methylobacterium sp. (strain 4-46).